The chain runs to 69 residues: Photosystem I reaction center subunit IV (69 aa).

Belongs to the PsaE family.

The protein resides in the cellular thylakoid membrane. In terms of biological role, stabilizes the interaction between PsaC and the PSI core, assists the docking of the ferredoxin to PSI and interacts with ferredoxin-NADP oxidoreductase. The sequence is that of Photosystem I reaction center subunit IV from Prochlorococcus marinus (strain MIT 9215).